A 277-amino-acid polypeptide reads, in one-letter code: Diaminopimelate epimerase (277 aa).

2 residues coordinate substrate: asparagine 11 and asparagine 62. Cysteine 71 functions as the Proton donor in the catalytic mechanism. Residues 72–73, asparagine 160, asparagine 193, and 211–212 each bind substrate; these read GN and ER. Residue cysteine 220 is the Proton acceptor of the active site. 221 to 222 contributes to the substrate binding site; it reads GT.

It belongs to the diaminopimelate epimerase family. In terms of assembly, homodimer.

The protein localises to the cytoplasm. The enzyme catalyses (2S,6S)-2,6-diaminopimelate = meso-2,6-diaminopimelate. It functions in the pathway amino-acid biosynthesis; L-lysine biosynthesis via DAP pathway; DL-2,6-diaminopimelate from LL-2,6-diaminopimelate: step 1/1. In terms of biological role, catalyzes the stereoinversion of LL-2,6-diaminopimelate (L,L-DAP) to meso-diaminopimelate (meso-DAP), a precursor of L-lysine. The protein is Diaminopimelate epimerase of Methanococcus maripaludis (strain DSM 14266 / JCM 13030 / NBRC 101832 / S2 / LL).